The chain runs to 345 residues: Alkaline phosphatase isozyme conversion protein (345 aa).

The N-terminal stretch at 1–24 (MFSALRHRTAALALGVCFILPVHA) is a signal peptide. Residues His117, Asp143, Glu176, and Asp204 each contribute to the Zn(2+) site.

The protein belongs to the peptidase M28 family. M28C subfamily.

In terms of biological role, this protein, presumably an aminopeptidase, mediates the conversion of E.coli alkaline phosphatase isozyme 1, to isozymes 2 and 3 by removing, one by one, the two N-terminal arginine residues. The chain is Alkaline phosphatase isozyme conversion protein (iap) from Escherichia coli (strain K12).